A 258-amino-acid chain; its full sequence is Thiazole synthase 1 (258 aa).

The active-site Schiff-base intermediate with DXP is Lys97. 1-deoxy-D-xylulose 5-phosphate-binding positions include Gly158, 184–185, and 206–207; these read AG and NT.

Belongs to the ThiG family. Homotetramer. Forms heterodimers with either ThiH or ThiS.

The protein resides in the cytoplasm. The catalysed reaction is [ThiS sulfur-carrier protein]-C-terminal-Gly-aminoethanethioate + 2-iminoacetate + 1-deoxy-D-xylulose 5-phosphate = [ThiS sulfur-carrier protein]-C-terminal Gly-Gly + 2-[(2R,5Z)-2-carboxy-4-methylthiazol-5(2H)-ylidene]ethyl phosphate + 2 H2O + H(+). It functions in the pathway cofactor biosynthesis; thiamine diphosphate biosynthesis. Catalyzes the rearrangement of 1-deoxy-D-xylulose 5-phosphate (DXP) to produce the thiazole phosphate moiety of thiamine. Sulfur is provided by the thiocarboxylate moiety of the carrier protein ThiS. In vitro, sulfur can be provided by H(2)S. This chain is Thiazole synthase 1, found in Syntrophotalea carbinolica (strain DSM 2380 / NBRC 103641 / GraBd1) (Pelobacter carbinolicus).